Here is a 225-residue protein sequence, read N- to C-terminus: MNKVAEIFREYGIKIDDSKTEKLDSYIDLLISAPINLTSLRDKEYAIHKHIVDIVFPVKMLTGKLLDVGTGGGIPGLILAILFPINATLVESVRKKVMWLEKILNMLNIGNVNLLCSRAEKLPADKKESFDIVTARAVSELRILLELCAPFCKVGGRLFFYKGPNWKQEYDAAHNAMKTLNVETIEIVSYTLKTGEKRVLLQFQKVGRTPDNYPRETKKILKNPL.

Residues Gly69, 119 to 120, and Arg136 contribute to the S-adenosyl-L-methionine site; that span reads AE.

The protein belongs to the methyltransferase superfamily. RNA methyltransferase RsmG family.

The protein resides in the cytoplasm. In terms of biological role, specifically methylates the N7 position of a guanine in 16S rRNA. The chain is Ribosomal RNA small subunit methyltransferase G from Pseudothermotoga lettingae (strain ATCC BAA-301 / DSM 14385 / NBRC 107922 / TMO) (Thermotoga lettingae).